The sequence spans 413 residues: Serine hydroxymethyltransferase (413 aa).

(6S)-5,6,7,8-tetrahydrofolate-binding positions include Leu119 and 123–125 (GHL). The residue at position 228 (Lys228) is an N6-(pyridoxal phosphate)lysine. Glu243 contacts (6S)-5,6,7,8-tetrahydrofolate.

The protein belongs to the SHMT family. Homodimer. It depends on pyridoxal 5'-phosphate as a cofactor.

It localises to the cytoplasm. It carries out the reaction (6R)-5,10-methylene-5,6,7,8-tetrahydrofolate + glycine + H2O = (6S)-5,6,7,8-tetrahydrofolate + L-serine. The protein operates within one-carbon metabolism; tetrahydrofolate interconversion. It participates in amino-acid biosynthesis; glycine biosynthesis; glycine from L-serine: step 1/1. Its function is as follows. Catalyzes the reversible interconversion of serine and glycine with tetrahydrofolate (THF) serving as the one-carbon carrier. This reaction serves as the major source of one-carbon groups required for the biosynthesis of purines, thymidylate, methionine, and other important biomolecules. Also exhibits THF-independent aldolase activity toward beta-hydroxyamino acids, producing glycine and aldehydes, via a retro-aldol mechanism. This is Serine hydroxymethyltransferase from Thermoanaerobacter pseudethanolicus (strain ATCC 33223 / 39E) (Clostridium thermohydrosulfuricum).